A 371-amino-acid chain; its full sequence is Putative glutamate--cysteine ligase 2 (371 aa).

This sequence belongs to the glutamate--cysteine ligase type 2 family. YbdK subfamily.

The catalysed reaction is L-cysteine + L-glutamate + ATP = gamma-L-glutamyl-L-cysteine + ADP + phosphate + H(+). Functionally, ATP-dependent carboxylate-amine ligase which exhibits weak glutamate--cysteine ligase activity. The sequence is that of Putative glutamate--cysteine ligase 2 from Cupriavidus necator (strain ATCC 17699 / DSM 428 / KCTC 22496 / NCIMB 10442 / H16 / Stanier 337) (Ralstonia eutropha).